A 181-amino-acid polypeptide reads, in one-letter code: Crustacyanin-C1 subunit (181 aa).

Disulfide bonds link Cys-12–Cys-121, Cys-51–Cys-173, and Cys-117–Cys-150.

It belongs to the calycin superfamily. Lipocalin family. In terms of assembly, oligomer; Can form dimers (beta-crustacyanin); or complexes of 16 subunits (alpha-crustacyanin). There are five types of subunits: A1, A2, A3, C1 and C2. In terms of tissue distribution, found in the carapace.

The protein resides in the secreted. It localises to the extracellular space. In terms of biological role, binds the carotenoid astaxanthin (AXT) which provides the blue coloration to the carapace of the lobster. The sequence is that of Crustacyanin-C1 subunit from Homarus gammarus (European lobster).